The chain runs to 88 residues: Small cysteine and glycine repeat-containing protein 1 (88 aa).

Residues 4–72 form a 10 X 2 AA repeats of CG region; that stretch reads CGCGGCGGCG…TCSSCGYSCG (69 aa).

The protein belongs to the KRTAP type 28 family.

In terms of biological role, in the hair cortex, hair keratin intermediate filaments are embedded in an interfilamentous matrix, consisting of hair keratin-associated proteins (KRTAP), which are essential for the formation of a rigid and resistant hair shaft through their extensive disulfide bond cross-linking with abundant cysteine residues of hair keratins. The matrix proteins include the high-sulfur and high-glycine-tyrosine keratins. This Homo sapiens (Human) protein is Small cysteine and glycine repeat-containing protein 1.